Here is a 332-residue protein sequence, read N- to C-terminus: Aspartate carbamoyltransferase catalytic subunit (332 aa).

Residues R54 and T55 each contribute to the carbamoyl phosphate site. K82 is an L-aspartate binding site. Positions 104, 134, and 137 each coordinate carbamoyl phosphate. L-aspartate contacts are provided by R175 and R230. Positions 271 and 272 each coordinate carbamoyl phosphate. A disordered region spans residues 312–332 (GGPDGDSTTSPGSGPEGGTTP).

Belongs to the aspartate/ornithine carbamoyltransferase superfamily. ATCase family. Heterododecamer (2C3:3R2) of six catalytic PyrB chains organized as two trimers (C3), and six regulatory PyrI chains organized as three dimers (R2).

It catalyses the reaction carbamoyl phosphate + L-aspartate = N-carbamoyl-L-aspartate + phosphate + H(+). It participates in pyrimidine metabolism; UMP biosynthesis via de novo pathway; (S)-dihydroorotate from bicarbonate: step 2/3. Catalyzes the condensation of carbamoyl phosphate and aspartate to form carbamoyl aspartate and inorganic phosphate, the committed step in the de novo pyrimidine nucleotide biosynthesis pathway. The polypeptide is Aspartate carbamoyltransferase catalytic subunit (Beutenbergia cavernae (strain ATCC BAA-8 / DSM 12333 / CCUG 43141 / JCM 11478 / NBRC 16432 / NCIMB 13614 / HKI 0122)).